Reading from the N-terminus, the 949-residue chain is Translation initiation factor IF-2 (949 aa).

Disordered regions lie at residues 54–183 (FLKP…EAAP), 217–288 (LPAA…EVAL), and 305–357 (EVVA…EMQA). Composition is skewed to basic and acidic residues over residues 67–92 (DQEK…ERHI) and 101–164 (IEAK…EEAA). 2 stretches are compositionally biased toward low complexity: residues 165–183 (RAAA…EAAP) and 217–228 (LPAAAPAAPSAP). Basic and acidic residues-rich tracts occupy residues 235–288 (PVEE…EVAL) and 330–339 (KYQDNEDRLQ). The 175-residue stretch at 445 to 619 (TRPPVITVMG…EMLNLQSNPT (175 aa)) folds into the tr-type G domain. A G1 region spans residues 454-461 (GHVDHGKT). Residue 454–461 (GHVDHGKT) coordinates GTP. Residues 479–483 (GITQH) are G2. Positions 501–504 (DTPG) are G3. Residues 501–505 (DTPGH) and 555–558 (NKID) each bind GTP. The segment at 555 to 558 (NKID) is G4. The G5 stretch occupies residues 591-593 (SAK).

This sequence belongs to the TRAFAC class translation factor GTPase superfamily. Classic translation factor GTPase family. IF-2 subfamily.

The protein localises to the cytoplasm. One of the essential components for the initiation of protein synthesis. Protects formylmethionyl-tRNA from spontaneous hydrolysis and promotes its binding to the 30S ribosomal subunits. Also involved in the hydrolysis of GTP during the formation of the 70S ribosomal complex. The polypeptide is Translation initiation factor IF-2 (Magnetococcus marinus (strain ATCC BAA-1437 / JCM 17883 / MC-1)).